A 105-amino-acid chain; its full sequence is Pyrimidine/purine nucleoside phosphorylase (105 aa).

It belongs to the nucleoside phosphorylase PpnP family.

It catalyses the reaction a purine D-ribonucleoside + phosphate = a purine nucleobase + alpha-D-ribose 1-phosphate. The enzyme catalyses adenosine + phosphate = alpha-D-ribose 1-phosphate + adenine. The catalysed reaction is cytidine + phosphate = cytosine + alpha-D-ribose 1-phosphate. It carries out the reaction guanosine + phosphate = alpha-D-ribose 1-phosphate + guanine. It catalyses the reaction inosine + phosphate = alpha-D-ribose 1-phosphate + hypoxanthine. The enzyme catalyses thymidine + phosphate = 2-deoxy-alpha-D-ribose 1-phosphate + thymine. The catalysed reaction is uridine + phosphate = alpha-D-ribose 1-phosphate + uracil. It carries out the reaction xanthosine + phosphate = alpha-D-ribose 1-phosphate + xanthine. Its function is as follows. Catalyzes the phosphorolysis of diverse nucleosides, yielding D-ribose 1-phosphate and the respective free bases. Can use uridine, adenosine, guanosine, cytidine, thymidine, inosine and xanthosine as substrates. Also catalyzes the reverse reactions. The sequence is that of Pyrimidine/purine nucleoside phosphorylase from Paracidovorax citrulli (strain AAC00-1) (Acidovorax citrulli).